A 1214-amino-acid chain; its full sequence is Myosin-1 (1214 aa).

Residues 1-21 are disordered; it reads MAIIKRGARNKTAQEPAKRSA. Residues 36 to 715 form the Myosin motor domain; that stretch reads VGVSDLTLLS…TLFALEHMRD (680 aa). 129–136 serves as a coordination point for ATP; sequence GESGAGKT. Position 357 is a phosphoserine (Ser357). The segment at 404-486 is actin-binding; the sequence is SIGILDIYGF…PGIFAAMNDS (83 aa). 2 IQ domains span residues 719–739 and 740–765; these read YNMAARIQRAWRRFLQRRIDS and ATRIQRAIREKKGGNKYEKLRDEGSK. In terms of domain architecture, TH1 spans 771–961; the sequence is KERRTMSLLG…TILVRRGHPA (191 aa). 3 disordered regions span residues 926 to 1090, 1129 to 1177, and 1193 to 1214; these read KPGK…SELP, HQGG…AAAQ, and NKMRVESDGEDNGNDDDDDDDW. A compositionally biased stretch (basic residues) spans 965–980; it reads QKKKPKKGKGHSKHHS. Low complexity-rich tracts occupy residues 981–1000 and 1037–1057; these read TSTSAPRSSVQSSQPSAPVS and AAQPQATPQPAQVTQPQQKKV. Over residues 1058 to 1067 the composition is skewed to pro residues; that stretch reads APPPPPPPPM. The 63-residue stretch at 1069-1131 folds into the SH3 domain; the sequence is SSEPKYEAAY…PTNYVVKHQG (63 aa). Low complexity predominate over residues 1157–1177; the sequence is VSSSQSETATTATPASVAAAQ. Residues 1200 to 1214 show a composition bias toward acidic residues; sequence DGEDNGNDDDDDDDW.

Belongs to the TRAFAC class myosin-kinesin ATPase superfamily. Myosin family. Post-translationally, phosphorylation of the TEDS site (Ser-357) is required for the polarization of the actin cytoskeleton. Phosphorylation probably activates the myosin-I ATPase activity.

It localises to the cytoplasm. It is found in the cytoskeleton. The protein localises to the actin patch. Its function is as follows. Type-I myosin implicated in the organization of the actin cytoskeleton. Required for proper actin cytoskeleton polarization. At the cell cortex, assembles in patch-like structures together with proteins from the actin-polymerizing machinery and promotes actin assembly. Functions as actin nucleation-promoting factor (NPF) for the Arp2/3 complex. The protein is Myosin-1 (MYO1) of Vanderwaltozyma polyspora (strain ATCC 22028 / DSM 70294 / BCRC 21397 / CBS 2163 / NBRC 10782 / NRRL Y-8283 / UCD 57-17) (Kluyveromyces polysporus).